Consider the following 356-residue polypeptide: Tyrosine recombinase XerS (356 aa).

The Core-binding (CB) domain maps to 16–121 (IMPWYVLDYY…ALSSLYKYLT (106 aa)). The region spanning 169–354 (AFLDYVDKEY…VNDEQKNALD (186 aa)) is the Tyr recombinase domain. Active-site residues include arginine 210, lysine 234, histidine 306, arginine 309, and histidine 332. The active-site O-(3'-phospho-DNA)-tyrosine intermediate is the tyrosine 341.

It belongs to the 'phage' integrase family. XerS subfamily.

The protein localises to the cytoplasm. FtsK is required for recombination. Its function is as follows. Site-specific tyrosine recombinase, which acts by catalyzing the cutting and rejoining of the recombining DNA molecules. Essential to convert dimers of the bacterial chromosome into monomers to permit their segregation at cell division. In Streptococcus pyogenes serotype M6 (strain ATCC BAA-946 / MGAS10394), this protein is Tyrosine recombinase XerS.